The primary structure comprises 815 residues: Probable AMP deaminase (815 aa).

The chain crosses the membrane as a helical span at residues 5–27 (YALHLAVATLLGASFAAASAYYM). Disordered regions lie at residues 53-116 (LLDA…PVPT) and 144-173 (LLTN…STNM). Residues 105–116 (VRPTTPRSPVPT) are compositionally biased toward low complexity. The segment covering 159-173 (ASQNGDTKPVPSTNM) has biased composition (polar residues). Zn(2+) is bound by residues histidine 367 and histidine 369. Residues histidine 369 and 438-443 (KFNLKY) contribute to the substrate site. Histidine 635 is a binding site for Zn(2+). Glutamate 638 is a binding site for substrate. Residue histidine 657 is the Proton acceptor of the active site. Aspartate 712 contributes to the Zn(2+) binding site. 713 to 716 (DPLQ) contacts substrate.

The protein belongs to the metallo-dependent hydrolases superfamily. Adenosine and AMP deaminases family. Homodimer. The cofactor is Zn(2+).

It is found in the membrane. The catalysed reaction is AMP + H2O + H(+) = IMP + NH4(+). It functions in the pathway purine metabolism; IMP biosynthesis via salvage pathway; IMP from AMP: step 1/1. Functionally, AMP deaminase plays a critical role in energy metabolism. The polypeptide is Probable AMP deaminase (AMPD) (Oryza sativa subsp. japonica (Rice)).